Here is a 469-residue protein sequence, read N- to C-terminus: Cytochrome c biogenesis protein CcsB (469 aa).

3 consecutive transmembrane segments (helical) span residues leucine 30–isoleucine 50, threonine 89–threonine 109, and isoleucine 175–serine 195.

Belongs to the Ccs1/CcsB family. May interact with CcsA.

Its subcellular location is the cellular thylakoid membrane. In terms of biological role, required during biogenesis of c-type cytochromes (cytochrome c6 and cytochrome f) at the step of heme attachment. The protein is Cytochrome c biogenesis protein CcsB of Synechococcus sp. (strain JA-2-3B'a(2-13)) (Cyanobacteria bacterium Yellowstone B-Prime).